Here is a 464-residue protein sequence, read N- to C-terminus: Soluble pyridine nucleotide transhydrogenase (464 aa).

35–44 (DNRPLVGGNC) contacts FAD.

It belongs to the class-I pyridine nucleotide-disulfide oxidoreductase family. It depends on FAD as a cofactor.

Its subcellular location is the cytoplasm. The catalysed reaction is NAD(+) + NADPH = NADH + NADP(+). Conversion of NADPH, generated by peripheral catabolic pathways, to NADH, which can enter the respiratory chain for energy generation. The sequence is that of Soluble pyridine nucleotide transhydrogenase from Ectopseudomonas mendocina (strain ymp) (Pseudomonas mendocina).